A 311-amino-acid chain; its full sequence is 4-diphosphocytidyl-2-C-methyl-D-erythritol kinase (311 aa).

Lys16 is a catalytic residue. 101–111 (PVAGGMAGGSA) serves as a coordination point for ATP. Asp143 is a catalytic residue.

The protein belongs to the GHMP kinase family. IspE subfamily.

It catalyses the reaction 4-CDP-2-C-methyl-D-erythritol + ATP = 4-CDP-2-C-methyl-D-erythritol 2-phosphate + ADP + H(+). It functions in the pathway isoprenoid biosynthesis; isopentenyl diphosphate biosynthesis via DXP pathway; isopentenyl diphosphate from 1-deoxy-D-xylulose 5-phosphate: step 3/6. Catalyzes the phosphorylation of the position 2 hydroxy group of 4-diphosphocytidyl-2C-methyl-D-erythritol. The sequence is that of 4-diphosphocytidyl-2-C-methyl-D-erythritol kinase from Rhodococcus jostii (strain RHA1).